Here is a 117-residue protein sequence, read N- to C-terminus: Large ribosomal subunit protein bL20 (117 aa).

The protein belongs to the bacterial ribosomal protein bL20 family.

Functionally, binds directly to 23S ribosomal RNA and is necessary for the in vitro assembly process of the 50S ribosomal subunit. It is not involved in the protein synthesizing functions of that subunit. This chain is Large ribosomal subunit protein bL20, found in Campylobacter lari (strain RM2100 / D67 / ATCC BAA-1060).